A 133-amino-acid chain; its full sequence is Salivary cystatin-L2 (133 aa).

The first 18 residues, 1-18 (MTSSLALVLLLGGAAVCA), serve as a signal peptide directing secretion. The Cystatin domain maps to 34–118 (DDPKYLELAH…RTCTAVIYEN (85 aa)).

Belongs to the cystatin family. Salivary gland, midgut and other tissues.

It localises to the secreted. In terms of biological role, inhibitor of cysteine proteinases. Inhibits host cathepsin L (CTSL) and S (CTSS). Modulates production of various cytokines and chemokines in lipopolysaccharide (LPS)-stimulated mouse dendritic cell. Suppresses maturation of mouse bone-marrow-derived dendritic cells (BMDCs). Its function is as follows. (Microbial infection) Modulates Borrelia miyamotoi-stimulated immune responses in mice by suppressing activities of host dendritic and T-cells. This is Salivary cystatin-L2 from Ixodes persulcatus (Taiga tick).